The primary structure comprises 131 residues: Chorion class high-cysteine HCB protein 12 (131 aa).

The signal sequence occupies residues 1-21; it reads MAAKLIVFVCAIALVAQSVLG. Residues 22 to 46 form a left arm region; the sequence is TGCGCCCRGCGCGCGGCGCGCCENF. Residues 47 to 110 are central domain; that stretch reads RVCSNSAAPT…GNGCVGITRS (64 aa). Residues 111 to 131 are right arm (Gly-rich tandem repeats); that stretch reads CGGCGCGCGGCGCGCGGCGCC.

It belongs to the chorion protein family.

Its function is as follows. This protein is one of many from the eggshell of the silk moth. This is Chorion class high-cysteine HCB protein 12 from Bombyx mori (Silk moth).